Here is a 1070-residue protein sequence, read N- to C-terminus: Alpha-glucosidase (1070 aa).

Residues 1-35 (MRSIKAASLTPLLAALFTTLSSTLALPSSVWEHQL) form the signal peptide. N-linked (GlcNAc...) asparagine glycans are attached at residues asparagine 48, asparagine 99, asparagine 144, asparagine 161, asparagine 208, asparagine 384, asparagine 458, asparagine 480, and asparagine 513. Residue aspartate 526 is the Nucleophile of the active site. Glutamate 529 is a catalytic residue. Residues asparagine 544, asparagine 566, asparagine 574, asparagine 578, and asparagine 635 are each glycosylated (N-linked (GlcNAc...) asparagine). Aspartate 730 serves as the catalytic Proton donor. Asparagine 818, asparagine 885, asparagine 916, asparagine 983, asparagine 992, asparagine 996, asparagine 1008, asparagine 1029, asparagine 1043, and asparagine 1052 each carry an N-linked (GlcNAc...) asparagine glycan.

The protein belongs to the glycosyl hydrolase 31 family.

The catalysed reaction is Hydrolysis of terminal, non-reducing (1-&gt;4)-linked alpha-D-glucose residues with release of alpha-D-glucose.. Its function is as follows. Hydrolyzes a broad range of alpha-D-linked glucopyranosides, including maltose (alpha-1,4), sucrose (alpha-1,2), isomaltose (alpha-1,6) and turanose (alpha-1,3). The chain is Alpha-glucosidase from Candida tsukubaensis (Yeast).